We begin with the raw amino-acid sequence, 199 residues long: ATP-dependent Clp protease proteolytic subunit (199 aa).

The tract at residues 1-23 is disordered; the sequence is MTTSAARKGLRTRGSACPRATRS. The active-site Nucleophile is serine 100. Histidine 125 is a catalytic residue.

Belongs to the peptidase S14 family. As to quaternary structure, fourteen ClpP subunits assemble into 2 heptameric rings which stack back to back to give a disk-like structure with a central cavity, resembling the structure of eukaryotic proteasomes.

The protein localises to the cytoplasm. The catalysed reaction is Hydrolysis of proteins to small peptides in the presence of ATP and magnesium. alpha-casein is the usual test substrate. In the absence of ATP, only oligopeptides shorter than five residues are hydrolyzed (such as succinyl-Leu-Tyr-|-NHMec, and Leu-Tyr-Leu-|-Tyr-Trp, in which cleavage of the -Tyr-|-Leu- and -Tyr-|-Trp bonds also occurs).. In terms of biological role, cleaves peptides in various proteins in a process that requires ATP hydrolysis. Has a chymotrypsin-like activity. Plays a major role in the degradation of misfolded proteins. The sequence is that of ATP-dependent Clp protease proteolytic subunit from Paracoccus denitrificans.